Here is a 274-residue protein sequence, read N- to C-terminus: MSASGEISTPRDYIGHHLNNLQLDLRTFELVNPHSPGPATFWTLNIDSLFFSVVLGLAFLFVFRKVAAGATSGVPGKLQTAVELIIGFVDNSVRDMYHGKSKVIAPLALTVFVWVLLMNMMDLLPIDLLPYIGEHVFGLPALRVVPTADVSITLSMALGVFILILFYSIKMKGVGGFVKELTMQPFNHPIFIPVNLILEGVSLLSKPVSLGLRLFGNMYAGELIFILIAGLLPWWSQWMLSLPWAIFHILIITLQAFIFMVLTIVYLSMASEEH.

5 helical membrane-spanning segments follow: residues 43 to 63, 103 to 123, 149 to 169, 223 to 243, and 245 to 265; these read TLNI…LFVF, VIAP…MMDL, DVSI…FYSI, LIFI…LSLP, and AIFH…LTIV.

The protein belongs to the ATPase A chain family. F-type ATPases have 2 components, CF(1) - the catalytic core - and CF(0) - the membrane proton channel. CF(1) has five subunits: alpha(3), beta(3), gamma(1), delta(1), epsilon(1). CF(0) has three main subunits: a(1), b(2) and c(9-12). The alpha and beta chains form an alternating ring which encloses part of the gamma chain. CF(1) is attached to CF(0) by a central stalk formed by the gamma and epsilon chains, while a peripheral stalk is formed by the delta and b chains.

It localises to the cell inner membrane. Its function is as follows. Key component of the proton channel; it plays a direct role in the translocation of protons across the membrane. The sequence is that of ATP synthase subunit a from Yersinia enterocolitica serotype O:8 / biotype 1B (strain NCTC 13174 / 8081).